A 202-amino-acid polypeptide reads, in one-letter code: MELTINGAGKGTVSVSDVAFARDFNEALVHQVVTAYLAGGRQGSKAQKTRSQVSGGGKKPWRQKGSGRARAGTIRSPIWRGGGKTFAATPLDHSQKVNKKMYRAAMQSILSELVRQERLVVVEEMAVEAPKTKQFNAKLKDLGLENVLIVADAVDQNLYLASRNIPHVDVCDAVAINPVSLIAHDKVLVTVSALKKIEEMLG.

The tract at residues glycine 40–alanine 71 is disordered. The segment covering serine 44–valine 53 has biased composition (polar residues).

The protein belongs to the universal ribosomal protein uL4 family. In terms of assembly, part of the 50S ribosomal subunit.

Functionally, one of the primary rRNA binding proteins, this protein initially binds near the 5'-end of the 23S rRNA. It is important during the early stages of 50S assembly. It makes multiple contacts with different domains of the 23S rRNA in the assembled 50S subunit and ribosome. Its function is as follows. Forms part of the polypeptide exit tunnel. In Hahella chejuensis (strain KCTC 2396), this protein is Large ribosomal subunit protein uL4.